Reading from the N-terminus, the 292-residue chain is ATP synthase gamma chain (292 aa).

The protein belongs to the ATPase gamma chain family. As to quaternary structure, F-type ATPases have 2 components, CF(1) - the catalytic core - and CF(0) - the membrane proton channel. CF(1) has five subunits: alpha(3), beta(3), gamma(1), delta(1), epsilon(1). CF(0) has three main subunits: a, b and c.

Its subcellular location is the cell membrane. Functionally, produces ATP from ADP in the presence of a proton gradient across the membrane. The gamma chain is believed to be important in regulating ATPase activity and the flow of protons through the CF(0) complex. The protein is ATP synthase gamma chain of Streptococcus pneumoniae (strain JJA).